The chain runs to 569 residues: MTSQDSLTSIGAARIAVTALLDGGVRHVVVAPGSRSAPMAYALAEAEAAGRVRLHVRIDERDAGFTALGLALSTEAPVAVVTTSGTAVGNLLPAVMEANHSAVPVVVISADRPEELHGTGANQTTIQLDLFGDHVRFAVDVPAGDHPQKAVATALYAATGALEDTPPGPVQVNLAFRDPLVPADGDALPAAAGHGVFHYDAGPQALNLPAASGELAERRTVVLAGHDAGPVAEAFARAHGLPLLAEPSSNARFGRNAVGPYRVLLAHFGPDSPTPIERVVLFGRATLSRPVASLLARESVVSAIYQPVPVAWYEEGRRRETPIETLPELADFAGRGSAEWLDSWLLAGAAAQHGLDGVLAGEDLANGPSVGATVWEHSRGQLVLGSSNGIRDVDLAGQPHPEPIATVYANRGLAGIDGTIATATGIALGSGRETTVLLGDVTFLHDAGGLLLGHGEPVPDLRIVVLNDSGGAIFSLLEHGAVEDSGAYGTAVERLFGTPHSVGIGALAAAYGVGHQTVSTTAELAAALKSPLKGRTIVEVRVDRSGLRALHARIKEAVSAAVGQVLTAG.

This sequence belongs to the TPP enzyme family. MenD subfamily. In terms of assembly, homodimer. Mg(2+) serves as cofactor. The cofactor is Mn(2+). Requires thiamine diphosphate as cofactor.

The catalysed reaction is isochorismate + 2-oxoglutarate + H(+) = 5-enolpyruvoyl-6-hydroxy-2-succinyl-cyclohex-3-ene-1-carboxylate + CO2. It functions in the pathway quinol/quinone metabolism; 1,4-dihydroxy-2-naphthoate biosynthesis; 1,4-dihydroxy-2-naphthoate from chorismate: step 2/7. The protein operates within quinol/quinone metabolism; menaquinone biosynthesis. Functionally, catalyzes the thiamine diphosphate-dependent decarboxylation of 2-oxoglutarate and the subsequent addition of the resulting succinic semialdehyde-thiamine pyrophosphate anion to isochorismate to yield 2-succinyl-5-enolpyruvyl-6-hydroxy-3-cyclohexene-1-carboxylate (SEPHCHC). The polypeptide is 2-succinyl-5-enolpyruvyl-6-hydroxy-3-cyclohexene-1-carboxylate synthase (Paenarthrobacter aurescens (strain TC1)).